Reading from the N-terminus, the 176-residue chain is RNA 2',3'-cyclic phosphodiesterase (176 aa).

The active-site Proton donor is His28. Short sequence motifs (HXTX) lie at residues 28-31 and 113-116; these read HITL and HVTL. His113 functions as the Proton acceptor in the catalytic mechanism.

The protein belongs to the 2H phosphoesterase superfamily. ThpR family.

It carries out the reaction a 3'-end 2',3'-cyclophospho-ribonucleotide-RNA + H2O = a 3'-end 2'-phospho-ribonucleotide-RNA + H(+). Hydrolyzes RNA 2',3'-cyclic phosphodiester to an RNA 2'-phosphomonoester. This is RNA 2',3'-cyclic phosphodiesterase from Aeropyrum pernix (strain ATCC 700893 / DSM 11879 / JCM 9820 / NBRC 100138 / K1).